The chain runs to 294 residues: Lipoyl synthase (294 aa).

C35, C40, C46, C61, C65, C68, and S275 together coordinate [4Fe-4S] cluster. A Radical SAM core domain is found at 46-264 (CWGGGTATVM…RDQGLALGFR (219 aa)).

It belongs to the radical SAM superfamily. Lipoyl synthase family. Requires [4Fe-4S] cluster as cofactor.

The protein localises to the cytoplasm. The enzyme catalyses [[Fe-S] cluster scaffold protein carrying a second [4Fe-4S](2+) cluster] + N(6)-octanoyl-L-lysyl-[protein] + 2 oxidized [2Fe-2S]-[ferredoxin] + 2 S-adenosyl-L-methionine + 4 H(+) = [[Fe-S] cluster scaffold protein] + N(6)-[(R)-dihydrolipoyl]-L-lysyl-[protein] + 4 Fe(3+) + 2 hydrogen sulfide + 2 5'-deoxyadenosine + 2 L-methionine + 2 reduced [2Fe-2S]-[ferredoxin]. The protein operates within protein modification; protein lipoylation via endogenous pathway; protein N(6)-(lipoyl)lysine from octanoyl-[acyl-carrier-protein]: step 2/2. Its function is as follows. Catalyzes the radical-mediated insertion of two sulfur atoms into the C-6 and C-8 positions of the octanoyl moiety bound to the lipoyl domains of lipoate-dependent enzymes, thereby converting the octanoylated domains into lipoylated derivatives. The protein is Lipoyl synthase of Anaeromyxobacter dehalogenans (strain 2CP-C).